The primary structure comprises 516 residues: GMP synthase [glutamine-hydrolyzing] (516 aa).

The 191-residue stretch at Lys8–Leu198 folds into the Glutamine amidotransferase type-1 domain. The active-site Nucleophile is the Cys84. Active-site residues include His172 and Glu174. Residues Trp199–Arg391 form the GMPS ATP-PPase domain. ATP is bound at residue Ser226 to Ser232.

As to quaternary structure, homodimer.

The enzyme catalyses XMP + L-glutamine + ATP + H2O = GMP + L-glutamate + AMP + diphosphate + 2 H(+). It participates in purine metabolism; GMP biosynthesis; GMP from XMP (L-Gln route): step 1/1. In terms of biological role, catalyzes the synthesis of GMP from XMP. The chain is GMP synthase [glutamine-hydrolyzing] from Francisella tularensis subsp. tularensis (strain WY96-3418).